The sequence spans 318 residues: N-acetyl-gamma-glutamyl-phosphate reductase (318 aa).

Cys132 is a catalytic residue.

It belongs to the NAGSA dehydrogenase family. Type 1 subfamily.

The protein resides in the cytoplasm. It catalyses the reaction N-acetyl-L-glutamate 5-semialdehyde + phosphate + NADP(+) = N-acetyl-L-glutamyl 5-phosphate + NADPH + H(+). The protein operates within amino-acid biosynthesis; L-arginine biosynthesis; N(2)-acetyl-L-ornithine from L-glutamate: step 3/4. Catalyzes the NADPH-dependent reduction of N-acetyl-5-glutamyl phosphate to yield N-acetyl-L-glutamate 5-semialdehyde. The chain is N-acetyl-gamma-glutamyl-phosphate reductase from Azobacteroides pseudotrichonymphae genomovar. CFP2.